Here is a 491-residue protein sequence, read N- to C-terminus: Acetyl-coenzyme A carboxylase carboxyl transferase subunit beta, chloroplastic (491 aa).

The CoA carboxyltransferase N-terminal domain occupies leucine 224 to lysine 491. Cysteine 228, cysteine 231, cysteine 247, and cysteine 250 together coordinate Zn(2+). The C4-type zinc-finger motif lies at cysteine 228–cysteine 250.

This sequence belongs to the AccD/PCCB family. In terms of assembly, acetyl-CoA carboxylase is a heterohexamer composed of biotin carboxyl carrier protein, biotin carboxylase and 2 subunits each of ACCase subunit alpha and ACCase plastid-coded subunit beta (accD). Zn(2+) is required as a cofactor.

The protein resides in the plastid. It is found in the chloroplast stroma. It carries out the reaction N(6)-carboxybiotinyl-L-lysyl-[protein] + acetyl-CoA = N(6)-biotinyl-L-lysyl-[protein] + malonyl-CoA. Its pathway is lipid metabolism; malonyl-CoA biosynthesis; malonyl-CoA from acetyl-CoA: step 1/1. In terms of biological role, component of the acetyl coenzyme A carboxylase (ACC) complex. Biotin carboxylase (BC) catalyzes the carboxylation of biotin on its carrier protein (BCCP) and then the CO(2) group is transferred by the transcarboxylase to acetyl-CoA to form malonyl-CoA. The protein is Acetyl-coenzyme A carboxylase carboxyl transferase subunit beta, chloroplastic of Vitis vinifera (Grape).